The sequence spans 433 residues: Glutamate-1-semialdehyde 2,1-aminomutase (433 aa).

Lys-271 is modified (N6-(pyridoxal phosphate)lysine).

Belongs to the class-III pyridoxal-phosphate-dependent aminotransferase family. HemL subfamily. As to quaternary structure, homodimer. Pyridoxal 5'-phosphate serves as cofactor.

It localises to the cytoplasm. The enzyme catalyses (S)-4-amino-5-oxopentanoate = 5-aminolevulinate. The protein operates within porphyrin-containing compound metabolism; protoporphyrin-IX biosynthesis; 5-aminolevulinate from L-glutamyl-tRNA(Glu): step 2/2. Its pathway is porphyrin-containing compound metabolism; chlorophyll biosynthesis. In Prochlorococcus marinus (strain MIT 9301), this protein is Glutamate-1-semialdehyde 2,1-aminomutase.